A 966-amino-acid chain; its full sequence is Insulin-degrading enzyme-like 2 (966 aa).

H71 provides a ligand contact to Zn(2+). Catalysis depends on E74, which acts as the Proton acceptor. H75 provides a ligand contact to Zn(2+). Residue E145 is part of the active site. E152 contacts Zn(2+).

It belongs to the peptidase M16 family. The cofactor is Zn(2+).

This is Insulin-degrading enzyme-like 2 from Arabidopsis thaliana (Mouse-ear cress).